We begin with the raw amino-acid sequence, 267 residues long: 7alpha-hydroxysteroid dehydrogenase (267 aa).

Residues 13–18 (SATRGI), arginine 38, 63–64 (DA), and asparagine 90 contribute to the NADP(+) site. 2 residues coordinate cholate: serine 145 and tyrosine 158. NADP(+) is bound by residues tyrosine 158, lysine 162, and 191-195 (IATDA). Catalysis depends on tyrosine 158, which acts as the Proton acceptor.

This sequence belongs to the short-chain dehydrogenases/reductases (SDR) family. In terms of assembly, homotetramer.

The enzyme catalyses cholate + NADP(+) = 3alpha,12alpha-dihydroxy-7-oxo-5beta-cholanate + NADPH + H(+). It catalyses the reaction chenodeoxycholate + NADP(+) = 7-oxolithocholate + NADPH + H(+). In terms of biological role, 7alpha-hydroxysteroid dehydrogenase that catalyzes the NADP(+)-dependent oxidation of the 7alpha-hydroxy group of 7alpha-hydroxysteroids, such as the major human bile acids cholate and chenodeoxycholate, to the corresponding 7-oxosteroids. Is thus liley involved in the metabolism of primary bile acids. The chain is 7alpha-hydroxysteroid dehydrogenase from Paraclostridium sordellii (Clostridium sordellii).